The sequence spans 247 residues: uncharacterized protein (247 aa).

This is an uncharacterized protein from Rickettsia prowazekii (strain Madrid E).